The following is a 150-amino-acid chain: 3-dehydroquinate dehydratase (150 aa).

Tyr-26 functions as the Proton acceptor in the catalytic mechanism. 3 residues coordinate substrate: Asn-77, His-83, and Asp-90. Catalysis depends on His-103, which acts as the Proton donor. Substrate-binding positions include 104-105 (IS) and Arg-114.

Belongs to the type-II 3-dehydroquinase family. Homododecamer.

The enzyme catalyses 3-dehydroquinate = 3-dehydroshikimate + H2O. The protein operates within metabolic intermediate biosynthesis; chorismate biosynthesis; chorismate from D-erythrose 4-phosphate and phosphoenolpyruvate: step 3/7. In terms of biological role, catalyzes a trans-dehydration via an enolate intermediate. In Buchnera aphidicola subsp. Acyrthosiphon pisum (strain 5A), this protein is 3-dehydroquinate dehydratase.